The following is a 609-amino-acid chain: UvrABC system protein C (609 aa).

Residues 16–94 form the GIY-YIG domain; it reads HLPGVYRHLD…IKSLRPRYNI (79 aa). The region spanning 203–238 is the UVR domain; the sequence is REVMDEIEARMLQASTELRFEEAAVLRDQMGSLSKV.

It belongs to the UvrC family. In terms of assembly, interacts with UvrB in an incision complex.

It localises to the cytoplasm. Its function is as follows. The UvrABC repair system catalyzes the recognition and processing of DNA lesions. UvrC both incises the 5' and 3' sides of the lesion. The N-terminal half is responsible for the 3' incision and the C-terminal half is responsible for the 5' incision. The sequence is that of UvrABC system protein C from Bordetella bronchiseptica (strain ATCC BAA-588 / NCTC 13252 / RB50) (Alcaligenes bronchisepticus).